The primary structure comprises 262 residues: Hydroxyethylthiazole kinase (262 aa).

Met-50 contributes to the substrate binding site. The ATP site is built by Arg-125 and Thr-171. Gly-198 contributes to the substrate binding site.

It belongs to the Thz kinase family. Mg(2+) is required as a cofactor.

The catalysed reaction is 5-(2-hydroxyethyl)-4-methylthiazole + ATP = 4-methyl-5-(2-phosphooxyethyl)-thiazole + ADP + H(+). Its pathway is cofactor biosynthesis; thiamine diphosphate biosynthesis; 4-methyl-5-(2-phosphoethyl)-thiazole from 5-(2-hydroxyethyl)-4-methylthiazole: step 1/1. Its function is as follows. Catalyzes the phosphorylation of the hydroxyl group of 4-methyl-5-beta-hydroxyethylthiazole (THZ). The chain is Hydroxyethylthiazole kinase from Shigella boydii serotype 4 (strain Sb227).